The following is a 156-amino-acid chain: Small ribosomal subunit protein uS7 (156 aa).

The protein belongs to the universal ribosomal protein uS7 family. As to quaternary structure, part of the 30S ribosomal subunit. Contacts proteins S9 and S11.

One of the primary rRNA binding proteins, it binds directly to 16S rRNA where it nucleates assembly of the head domain of the 30S subunit. Is located at the subunit interface close to the decoding center, probably blocks exit of the E-site tRNA. The polypeptide is Small ribosomal subunit protein uS7 (Azoarcus sp. (strain BH72)).